We begin with the raw amino-acid sequence, 407 residues long: Spore germination protein KC (407 aa).

The N-terminal stretch at 1 to 20 is a signal peptide; the sequence is MVRKCLLAVLMLLSVIVLPG. A lipid anchor (N-palmitoyl cysteine) is attached at Cys21. The S-diacylglycerol cysteine moiety is linked to residue Cys21.

It belongs to the GerABKC lipoprotein family.

Its subcellular location is the cell membrane. Functionally, involved in the germination response to the combination of glucose, fructose, L-asparagine, and KCl. The protein is Spore germination protein KC (gerKC) of Bacillus subtilis (strain 168).